The following is an 81-amino-acid chain: Sulfur carrier protein TusA (81 aa).

Residue cysteine 19 is the Cysteine persulfide intermediate of the active site.

Belongs to the sulfur carrier protein TusA family.

The protein localises to the cytoplasm. Its function is as follows. Sulfur carrier protein which probably makes part of a sulfur-relay system. This Shewanella denitrificans (strain OS217 / ATCC BAA-1090 / DSM 15013) protein is Sulfur carrier protein TusA.